Consider the following 552-residue polypeptide: Protein FAM234A (552 aa).

The tract at residues 1-40 (MMDDKDLEAEIHPLKNEDKKSQENLGNLPKTEDNLKNKPV) is disordered. The Cytoplasmic segment spans residues 1 to 49 (MMDDKDLEAEIHPLKNEDKKSQENLGNLPKTEDNLKNKPVPSRLSRCRT). Over residues 8–22 (EAEIHPLKNEDKKSQ) the composition is skewed to basic and acidic residues. Position 21 is a phosphoserine (Ser21). A helical; Signal-anchor for type II membrane protein transmembrane segment spans residues 50–70 (VAFFLSLFICLFVVFVLSFII). Over 71–552 (PCPDRPSSED…FSRLRYRSEV (482 aa)) the chain is Extracellular. 4 N-linked (GlcNAc...) asparagine glycosylation sites follow: Asn116, Asn119, Asn314, and Asn473.

This sequence belongs to the FAM234 family.

It is found in the membrane. This Rattus norvegicus (Rat) protein is Protein FAM234A (Fam234a).